Consider the following 204-residue polypeptide: MAYTIEEEQELTAIKAWWNENYKFIIVCFVIAFGGVFGWNYWQSHQIQKMHKASAEYEQALFNYQKDPKAQAEQFNQFIKNNEKTSYAVLALLDKAKIAVENKDFPLAEDALKQAMAQSNDDILSSVSALRLASVQFQLGQLDPALESLKSVKEQAWNSAKNLLAGDIQLAKGDKETAKKSYQQAQENAGALEQQLIQVRLNNL.

Residues 1–23 (MAYTIEEEQELTAIKAWWNENYK) are Cytoplasmic-facing. A helical transmembrane segment spans residues 24-44 (FIIVCFVIAFGGVFGWNYWQS). Over 45-204 (HQIQKMHKAS…QLIQVRLNNL (160 aa)) the chain is Periplasmic.

The protein belongs to the YfgM family. In terms of assembly, interacts with the SecYEG translocon. Forms a complex with PpiD.

The protein resides in the cell inner membrane. In terms of biological role, may mediate protein transfer from the SecYEG translocon to the periplasmic chaperone network via its periplasmic C-terminal region. The protein is Ancillary SecYEG translocon subunit (1057) of Aggregatibacter actinomycetemcomitans (Actinobacillus actinomycetemcomitans).